A 170-amino-acid chain; its full sequence is Transcription factor E (170 aa).

In terms of domain architecture, HTH TFE/IIEalpha-type spans 1 to 93; sequence MKDVYLYIVE…TWYVDDEIIK (93 aa).

Belongs to the TFE family. In terms of assembly, monomer. Interaction with RNA polymerase subunits RpoF and RpoE is necessary for Tfe stimulatory transcription activity. Able to interact with Tbp and RNA polymerase in the absence of DNA promoter. Interacts both with the preinitiation and elongation complexes.

Transcription factor that plays a role in the activation of archaeal genes transcribed by RNA polymerase. Facilitates transcription initiation by enhancing TATA-box recognition by TATA-box-binding protein (Tbp), and transcription factor B (Tfb) and RNA polymerase recruitment. Not absolutely required for transcription in vitro, but particularly important in cases where Tbp or Tfb function is not optimal. It dynamically alters the nucleic acid-binding properties of RNA polymerases by stabilizing the initiation complex and destabilizing elongation complexes. Seems to translocate with the RNA polymerase following initiation and acts by binding to the non template strand of the transcription bubble in elongation complexes. In Pyrobaculum aerophilum (strain ATCC 51768 / DSM 7523 / JCM 9630 / CIP 104966 / NBRC 100827 / IM2), this protein is Transcription factor E.